Reading from the N-terminus, the 266-residue chain is Indole-3-glycerol phosphate synthase (266 aa).

It belongs to the TrpC family.

The catalysed reaction is 1-(2-carboxyphenylamino)-1-deoxy-D-ribulose 5-phosphate + H(+) = (1S,2R)-1-C-(indol-3-yl)glycerol 3-phosphate + CO2 + H2O. Its pathway is amino-acid biosynthesis; L-tryptophan biosynthesis; L-tryptophan from chorismate: step 4/5. The protein is Indole-3-glycerol phosphate synthase of Variovorax paradoxus (strain S110).